Consider the following 776-residue polypeptide: MPDSVEDTSTISLRICLEGHANALALNKDNNQIALAGRSLLKVYSINSNGFTESCNMRGKNQNLSYSANDVAWSTLDSNLLATAATNGVVSVWDLSKFGRQKQLLVYNEHERTAHTVTFHSSEPNILISGSQDGTIKCFDIRSDKSINTYFCNSESVRDVKFSPHTQNIFSAVSENGTVQLWDMRKWDKCMVQFTAHYGPVYTCDWHPTRNWLATGSRDKQIKVWNMDGRPGLEHTIHTIAVVGRVKWRPERTYHIASCALVVDYSVHVWDIRRPYIPFASFNEHTNVTTGIAWQGSDSHCLLSISKDSTIYKHAFKDATRPALKANAQGASLGRFGDISFANKIKEYEPKTSGASNTKSSSFIRRKTNVAGSIQFHLDHSKMYKFMVNDTFSGYPLSESVSRPTQEHESFIGCARELVISGKKLSELCEHNAEVSKKYGKHNATTLWNFIKLFYGSNHFEPPFEHRSSFSNQKNPMNSRRATQVASDWPQQRTELGQDLNGNTPETAHEIDVANVDDDTLGSSGVEHPPTSSVILSETQIISEITFDNFELLRNGFIYVGPTECPKALAFPALHHDVQAARPQLDLKASDHEKSPPPHVPTVLKVSHVPPIPMWEPHKFVSDALMLMNDVGDVQTALTVLIALGEARKLLPIDDALVEHWFYTYVDQLHRYELWNEACEVINRSWLRSVQQLNQHSTAMHTNCGECGRPMGGKVGWYCDKCKSMQSAKCCVCGLIVRGVYAWCQGCSHGGHIEHLQKYFAKHSKCPKCGHLCAYS.

WD repeat units follow at residues 63–103 (NLSY…RQKQ), 109–149 (EHER…SINT), 152–192 (CNSE…KCMV), 196–235 (AHYGPVYTCDWHPTRNWLATGSRDKQIKVWNMDGRPGLEH), 238–280 (HTIA…IPFA), and 284–326 (EHTN…ALKA). The segment at 466-490 (HRSSFSNQKNPMNSRRATQVASDWP) is disordered. The segment covering 469–490 (SFSNQKNPMNSRRATQVASDWP) has biased composition (polar residues). Residues 703–726 (NCGECGRPMGGKVGWYCDKCKSMQ) form a C4-type zinc finger. Residues cysteine 704, cysteine 707, cysteine 719, cysteine 722, cysteine 730, cysteine 733, cysteine 744, cysteine 747, histidine 749, histidine 752, histidine 755, cysteine 766, cysteine 769, histidine 771, and cysteine 773 each contribute to the Zn(2+) site. The RING-type; atypical zinc-finger motif lies at 728 to 776 (AKCCVCGLIVRGVYAWCQGCSHGGHIEHLQKYFAKHSKCPKCGHLCAYS).

This sequence belongs to the WD repeat WDR24 family. As to quaternary structure, component of the GATOR complex consisting of mio, Nup44A/Seh1, Im11, Nplr3, Nplr2, Wdr24, Wdr59 and Sec13. Within the GATOR complex, probable component of the GATOR2 subcomplex which is likely composed of mio, Nup44A/Seh1, Wdr24, Wdr59 and Sec13. Interacts with Nup44A/Seh1. Interacts with mio. Interacts with Nplr3. The GATOR2 complex associates with unmet in the absence of S-adenosyl-L-methionine; the mio-Wdr24-Nup44A subcomplex is essential and sufficient for this interaction while Wdr59 and Sec13 are dispensable. This association acts as a nutrient sensor to inhibit mTORC1 signaling in the absence of methionine.

It is found in the lysosome. The protein resides in the cytoplasmic vesicle. Its subcellular location is the autophagosome. It catalyses the reaction S-ubiquitinyl-[E2 ubiquitin-conjugating enzyme]-L-cysteine + [acceptor protein]-L-lysine = [E2 ubiquitin-conjugating enzyme]-L-cysteine + N(6)-ubiquitinyl-[acceptor protein]-L-lysine.. It functions in the pathway protein modification; protein ubiquitination. An essential component of the GATOR subcomplex GATOR2 which functions as an activator of the amino acid-sensing branch of the mTORC1 signaling pathway. The two GATOR subcomplexes, GATOR1 and GATOR2, regulate the mTORC1 pathway in order to mediate metabolic homeostasis, female gametogenesis and the response to amino acid limitation and complete starvation. GATOR2 activates the mTORC1 signaling pathway through the inhibition of the GATOR1 subcomplex, controlling the switch to cell proliferation and growth under nutrient replete conditions and during female oocyte development. GATOR2 probably acts as an E3 ubiquitin-protein ligase toward GATOR1. In the presence of abundant amino acids, the GATOR2 complex mediates ubiquitination of components of the GATOR1 complex, leading to GATOR1 inactivation. This GATOR2 component is required for activating mTORC1 and promoting cell growth in both germline and somatic cells. In addition to its role in regulation of the mTORC1 complex, functions independently of mTORC1 to promote the acidification of lysosomes and facilitates autophagic flux. The sequence is that of GATOR2 complex protein Wdr24 from Drosophila melanogaster (Fruit fly).